The chain runs to 351 residues: Uroporphyrinogen decarboxylase (351 aa).

Residues 25 to 29, D74, Y151, S206, and H325 each bind substrate; that span reads RQAGR.

The protein belongs to the uroporphyrinogen decarboxylase family. In terms of assembly, homodimer.

Its subcellular location is the cytoplasm. The enzyme catalyses uroporphyrinogen III + 4 H(+) = coproporphyrinogen III + 4 CO2. The protein operates within porphyrin-containing compound metabolism; protoporphyrin-IX biosynthesis; coproporphyrinogen-III from 5-aminolevulinate: step 4/4. In terms of biological role, catalyzes the decarboxylation of four acetate groups of uroporphyrinogen-III to yield coproporphyrinogen-III. The protein is Uroporphyrinogen decarboxylase of Pelodictyon phaeoclathratiforme (strain DSM 5477 / BU-1).